A 480-amino-acid chain; its full sequence is Endoplasmic reticulum lectin 1 (480 aa).

An N-terminal signal peptide occupies residues 1–27 (MRRSDRFPCAGASLLVVLCGVFPSSFG). MRH domains are found at residues 108–245 (SSCS…LCNH) and 339–466 (SYCF…ICKI). A disulfide bond links cysteine 110 and cysteine 123. Residues 152–172 (VKKSPSEAGENQEDKERTEGH) are disordered. The span at 163-172 (QEDKERTEGH) shows a compositional bias: basic and acidic residues. 5 cysteine pairs are disulfide-bonded: cysteine 198-cysteine 231, cysteine 214-cysteine 243, cysteine 341-cysteine 354, cysteine 418-cysteine 452, and cysteine 433-cysteine 464.

Its subcellular location is the endoplasmic reticulum lumen. In terms of biological role, probable lectin that binds selectively to improperly folded lumenal proteins. May function in endoplasmic reticulum quality control and endoplasmic reticulum-associated degradation (ERAD) of both non-glycosylated proteins and glycoproteins. This is Endoplasmic reticulum lectin 1 (erlec1) from Xenopus laevis (African clawed frog).